We begin with the raw amino-acid sequence, 379 residues long: Cytochrome b (379 aa).

The next 4 membrane-spanning stretches (helical) occupy residues 34–54 (FGSLLGICLITQILTGLLLAM), 78–99 (WLIRNLHANGASFFFICIYLHI), 114–134 (WNTGVILLLTLMATAFVGYVL), and 179–199 (FFALHFLLPFLIAGITIIHLT). 2 residues coordinate heme b: His84 and His98. Residues His183 and His197 each coordinate heme b. His202 serves as a coordination point for a ubiquinone. 4 helical membrane passes run 227–247 (LKDILGFTLMFIPLLILAFFS), 289–309 (LGGVLALAASVLILFLIPFLH), 321–341 (LSQMLFWLLVANLLILTWIGS), and 348–368 (FIIIGQTASFTYFLILLILFP).

It belongs to the cytochrome b family. As to quaternary structure, the cytochrome bc1 complex contains 11 subunits: 3 respiratory subunits (MT-CYB, CYC1 and UQCRFS1), 2 core proteins (UQCRC1 and UQCRC2) and 6 low-molecular weight proteins (UQCRH/QCR6, UQCRB/QCR7, UQCRQ/QCR8, UQCR10/QCR9, UQCR11/QCR10 and a cleavage product of UQCRFS1). This cytochrome bc1 complex then forms a dimer. Heme b serves as cofactor.

Its subcellular location is the mitochondrion inner membrane. In terms of biological role, component of the ubiquinol-cytochrome c reductase complex (complex III or cytochrome b-c1 complex) that is part of the mitochondrial respiratory chain. The b-c1 complex mediates electron transfer from ubiquinol to cytochrome c. Contributes to the generation of a proton gradient across the mitochondrial membrane that is then used for ATP synthesis. The sequence is that of Cytochrome b (MT-CYB) from Dromaius novaehollandiae (Emu).